Consider the following 310-residue polypeptide: Ornithine carbamoyltransferase (310 aa).

Carbamoyl phosphate is bound by residues Ser-58–Thr-61, Gln-85, Arg-109, and His-136–Gln-139. L-ornithine is bound by residues Asn-167, Asp-227, and Ser-231–Met-232. Carbamoyl phosphate contacts are provided by residues Cys-266–Leu-267 and Arg-294.

This sequence belongs to the aspartate/ornithine carbamoyltransferase superfamily. OTCase family.

It localises to the cytoplasm. The catalysed reaction is carbamoyl phosphate + L-ornithine = L-citrulline + phosphate + H(+). The protein operates within amino-acid biosynthesis; L-arginine biosynthesis; L-arginine from L-ornithine and carbamoyl phosphate: step 1/3. In terms of biological role, reversibly catalyzes the transfer of the carbamoyl group from carbamoyl phosphate (CP) to the N(epsilon) atom of ornithine (ORN) to produce L-citrulline. The protein is Ornithine carbamoyltransferase of Rhodopseudomonas palustris (strain ATCC BAA-98 / CGA009).